A 258-amino-acid polypeptide reads, in one-letter code: 3-deoxy-manno-octulosonate cytidylyltransferase (258 aa).

This sequence belongs to the KdsB family.

The protein resides in the cytoplasm. It catalyses the reaction 3-deoxy-alpha-D-manno-oct-2-ulosonate + CTP = CMP-3-deoxy-beta-D-manno-octulosonate + diphosphate. Its pathway is nucleotide-sugar biosynthesis; CMP-3-deoxy-D-manno-octulosonate biosynthesis; CMP-3-deoxy-D-manno-octulosonate from 3-deoxy-D-manno-octulosonate and CTP: step 1/1. It functions in the pathway bacterial outer membrane biogenesis; lipopolysaccharide biosynthesis. Activates KDO (a required 8-carbon sugar) for incorporation into bacterial lipopolysaccharide in Gram-negative bacteria. The polypeptide is 3-deoxy-manno-octulosonate cytidylyltransferase (Nitrobacter hamburgensis (strain DSM 10229 / NCIMB 13809 / X14)).